The sequence spans 354 residues: Uroporphyrinogen decarboxylase (354 aa).

Substrate-binding positions include 27–31 (RQAGR), Asp77, Tyr153, Thr208, and His326.

This sequence belongs to the uroporphyrinogen decarboxylase family. In terms of assembly, homodimer.

The protein resides in the cytoplasm. The catalysed reaction is uroporphyrinogen III + 4 H(+) = coproporphyrinogen III + 4 CO2. It functions in the pathway porphyrin-containing compound metabolism; protoporphyrin-IX biosynthesis; coproporphyrinogen-III from 5-aminolevulinate: step 4/4. Catalyzes the decarboxylation of four acetate groups of uroporphyrinogen-III to yield coproporphyrinogen-III. This is Uroporphyrinogen decarboxylase from Neisseria meningitidis serogroup C / serotype 2a (strain ATCC 700532 / DSM 15464 / FAM18).